We begin with the raw amino-acid sequence, 503 residues long: Probable cytosol aminopeptidase (503 aa).

Residues Lys-270 and Asp-275 each coordinate Mn(2+). The active site involves Lys-282. Mn(2+) is bound by residues Asp-293, Asp-352, and Glu-354. The active site involves Arg-356.

This sequence belongs to the peptidase M17 family. Mn(2+) is required as a cofactor.

It is found in the cytoplasm. It catalyses the reaction Release of an N-terminal amino acid, Xaa-|-Yaa-, in which Xaa is preferably Leu, but may be other amino acids including Pro although not Arg or Lys, and Yaa may be Pro. Amino acid amides and methyl esters are also readily hydrolyzed, but rates on arylamides are exceedingly low.. The enzyme catalyses Release of an N-terminal amino acid, preferentially leucine, but not glutamic or aspartic acids.. Its function is as follows. Presumably involved in the processing and regular turnover of intracellular proteins. Catalyzes the removal of unsubstituted N-terminal amino acids from various peptides. This is Probable cytosol aminopeptidase from Yersinia enterocolitica serotype O:8 / biotype 1B (strain NCTC 13174 / 8081).